Here is an 825-residue protein sequence, read N- to C-terminus: BEN domain-containing protein 3 (825 aa).

A compositionally biased stretch (acidic residues) spans 1 to 11 (MNSTEISEDVE). The segment at 1–35 (MNSTEISEDVEEVLKNNPVKAEGSDATLDCSRNSR) is disordered. K20 is covalently cross-linked (Glycyl lysine isopeptide (Lys-Gly) (interchain with G-Cter in SUMO); alternate). Residue K20 forms a Glycyl lysine isopeptide (Lys-Gly) (interchain with G-Cter in SUMO1); alternate linkage. Residue K20 forms a Glycyl lysine isopeptide (Lys-Gly) (interchain with G-Cter in SUMO2); alternate linkage. Glycyl lysine isopeptide (Lys-Gly) (interchain with G-Cter in SUMO2) cross-links involve residues K39, K54, K56, K71, K126, K127, K135, K140, K156, and K174. The disordered stretch occupies residues 52 to 122 (SSKRKQLDSD…EEEPSTEATV (71 aa)). A Nuclear localization signal motif is present at residues 54-56 (KRK). The BEN 1 domain maps to 239–340 (PPPEYQLTAS…DFFSRFWAQR (102 aa)). Phosphoserine is present on S376. The BEN 2 domain occupies 384-484 (ASDHVVDTQD…DELEGLGLEG (101 aa)). K424 is covalently cross-linked (Glycyl lysine isopeptide (Lys-Gly) (interchain with G-Cter in SUMO2)). A Phosphoserine modification is found at S486. K509 is covalently cross-linked (Glycyl lysine isopeptide (Lys-Gly) (interchain with G-Cter in SUMO); alternate). K509 is covalently cross-linked (Glycyl lysine isopeptide (Lys-Gly) (interchain with G-Cter in SUMO2); alternate). K525 participates in a covalent cross-link: Glycyl lysine isopeptide (Lys-Gly) (interchain with G-Cter in SUMO2). The 101-residue stretch at 547–647 (GSDCLLSKEQ…ERCRRRDTEQ (101 aa)) folds into the BEN 3 domain. K697 is covalently cross-linked (Glycyl lysine isopeptide (Lys-Gly) (interchain with G-Cter in SUMO2)). Residues 712-813 (VPSPYLLSDK…ERCRRPNRKK (102 aa)) enclose the BEN 4 domain.

As to quaternary structure, homooligomer, probably a homooctamer. Interacts with HDAC2 and HDAC3, but not HDAC1. Interacts with SALL4. Interacts with SMARCA5/SNF2H, BAZ2A/TIP5 and USP21. Interacts with the nucleosome remodeling and histone deacetylase (NuRD) repressor complex. Interacts (via BEN domains 1 and 3) with ERCC6L (via N-terminal TPR repeat); the interaction is direct. Post-translationally, sumoylated at Lys-20 by SUMO1 and at Lys-509 by SUMO1, SUMO2 and SUMO3. Sumoylation probably occurs sequentially, with that of Lys-20 preceding that of Lys-509. It does not alter association with heterochromatin, but is required for the repression of transcription.

The protein resides in the nucleus. The protein localises to the nucleolus. Its function is as follows. Transcriptional repressor which associates with the NoRC (nucleolar remodeling complex) complex and plays a key role in repressing rDNA transcription. The sumoylated form modulates the stability of the NoRC complex component BAZ2A/TIP5 by controlling its USP21-mediated deubiquitination. Binds to unmethylated major satellite DNA and is involved in the recruitment of the Polycomb repressive complex 2 (PRC2) to major satellites. Stimulates the ERCC6L translocase and ATPase activities. This is BEN domain-containing protein 3 (Bend3) from Mus musculus (Mouse).